The following is a 617-amino-acid chain: MGNDKTNMFVAIGLSLLVLLGWQYFVAGPRMEQQRQIEAQNKAAQQQPPGVTPDGVPSPSPKEGGPAAPAPGTLPTAQGGPVSREAALARSPRVRIETPALSGSIALKGGRVDDVSLKNYHETIDPKSPEIVLFSPAGTETPYYAEFGWVGANAGPLPTNDTLWTSDGKTLSPGMPVTLTWDNGAGLVFKRIIAVDDKYMFTIRDEVENKGSGAITLYPYSLVSRWGKPHTQGYYVLHEGMIGYLGNDGLQEFTYDKLAKEGAYGGANTKGKAWTGVTGGFVGITDKYWAAAAIPDQDTPYTGAFTDRTDGATNVYQASVRGDAVNLAAGASATATQRLFAGAKEVNVINNYEKDLGIKHFDLMIDWGWFFFITKPMFRALDFFYHLFGNFGVSILVVTFCLKLLFLPIANRSYVSMAKMKAVQPEMAAIRERYKDDRMKQQQATMELYKKEKINPVAGCWPVLIQIPVFFALYKVLFITIEMRHAPFFGWIRDLAAPDPTSIVNLFGLLPFPAPDFVHLGVWPIIMGITMFVQMKMNPAPPDPVQAQIFTFMPIVFTFMLGSFPAGLVIYWAWNNTLSVIQQYVIMRRNGVKVELWDNLRSTFRRGNGTKAAATKS.

Residues 8 to 28 traverse the membrane as a helical segment; that stretch reads MFVAIGLSLLVLLGWQYFVAG. Residues 36 to 49 show a composition bias toward polar residues; that stretch reads QIEAQNKAAQQQPP. The segment at 36 to 91 is disordered; that stretch reads QIEAQNKAAQQQPPGVTPDGVPSPSPKEGGPAAPAPGTLPTAQGGPVSREAALARS. Over residues 61–81 the composition is skewed to low complexity; sequence PKEGGPAAPAPGTLPTAQGGP. 4 helical membrane-spanning segments follow: residues 387–407, 461–481, 517–533, and 549–569; these read LFGN…LLFL, WPVL…FITI, FVHL…TMFV, and IFTF…AGLV.

This sequence belongs to the OXA1/ALB3/YidC family. Type 1 subfamily. As to quaternary structure, interacts with the Sec translocase complex via SecD. Specifically interacts with transmembrane segments of nascent integral membrane proteins during membrane integration.

The protein localises to the cell inner membrane. Required for the insertion and/or proper folding and/or complex formation of integral membrane proteins into the membrane. Involved in integration of membrane proteins that insert both dependently and independently of the Sec translocase complex, as well as at least some lipoproteins. Aids folding of multispanning membrane proteins. This chain is Membrane protein insertase YidC, found in Methylobacterium radiotolerans (strain ATCC 27329 / DSM 1819 / JCM 2831 / NBRC 15690 / NCIMB 10815 / 0-1).